Consider the following 468-residue polypeptide: Ubiquinone biosynthesis monooxygenase COQ6, mitochondrial (468 aa).

The transit peptide at 1-28 (MAARLVSRCGAVRAAPHSGPLVSWRRWS) directs the protein to the mitochondrion.

The protein belongs to the UbiH/COQ6 family. As to quaternary structure, component of a multi-subunit COQ enzyme complex, composed of at least COQ3, COQ4, COQ5, COQ6, COQ7 and COQ9. Interacts with COQ8B and COQ7. The cofactor is FAD. In terms of tissue distribution, widely expressed.

The protein resides in the mitochondrion inner membrane. Its subcellular location is the golgi apparatus. It localises to the cell projection. The catalysed reaction is 4-hydroxy-3-(all-trans-decaprenyl)benzoate + 2 reduced [2Fe-2S]-[ferredoxin] + O2 + 2 H(+) = 3,4-dihydroxy-5-(all-trans-decaprenyl)benzoate + 2 oxidized [2Fe-2S]-[ferredoxin] + H2O. The enzyme catalyses 2-methoxy-6-(all-trans-decaprenyl)phenol + 2 reduced [2Fe-2S]-[ferredoxin] + O2 + 2 H(+) = 2-methoxy-6-(all-trans-decaprenyl)benzene-1,4-diol + 2 oxidized [2Fe-2S]-[ferredoxin] + H2O. Its pathway is cofactor biosynthesis; ubiquinone biosynthesis. In terms of biological role, FAD-dependent monooxygenase required for two non-consecutive steps during ubiquinone biosynthesis. Required for the C5-ring hydroxylation during ubiquinone biosynthesis by catalyzing the hydroxylation of 4-hydroxy-3-(all-trans-decaprenyl)benzoic acid to 3,4-dihydroxy-5-(all-trans-decaprenyl)benzoic acid. Also acts downstream of COQ4, for the C1-hydroxylation during ubiquinone biosynthesis by catalyzing the hydroxylation of 2-methoxy-6-(all-trans-decaprenyl)phenol to 2-methoxy-6-(all-trans-decaprenyl)benzene-1,4-diol. The electrons required for the hydroxylation reaction are funneled indirectly to COQ6 from NADPH via a ferredoxin/ferredoxin reductase system composed of FDX2 and FDXR. The chain is Ubiquinone biosynthesis monooxygenase COQ6, mitochondrial from Homo sapiens (Human).